The sequence spans 184 residues: Probable RNA 2'-phosphotransferase (184 aa).

Belongs to the KptA/TPT1 family.

Functionally, removes the 2'-phosphate from RNA via an intermediate in which the phosphate is ADP-ribosylated by NAD followed by a presumed transesterification to release the RNA and generate ADP-ribose 1''-2''-cyclic phosphate (APPR&gt;P). May function as an ADP-ribosylase. The sequence is that of Probable RNA 2'-phosphotransferase from Escherichia coli O9:H4 (strain HS).